The primary structure comprises 172 residues: Peptidyl-prolyl cis-trans isomerase (172 aa).

The region spanning 7-170 (FFDMSVGGQP…KKVVVEDCGQ (164 aa)) is the PPIase cyclophilin-type domain.

Belongs to the cyclophilin-type PPIase family. Post-translationally, not glycosylated. As to expression, expressed in pollen.

Its subcellular location is the cytoplasm. It catalyses the reaction [protein]-peptidylproline (omega=180) = [protein]-peptidylproline (omega=0). Binds cyclosporin A (CsA). CsA mediates some of its effects via an inhibitory action on PPIase. Functionally, PPIases accelerate the folding of proteins. It catalyzes the cis-trans isomerization of proline imidic peptide bonds in oligopeptides. This chain is Peptidyl-prolyl cis-trans isomerase (PCKR1), found in Catharanthus roseus (Madagascar periwinkle).